The sequence spans 39 residues: Photosystem I reaction center subunit IX (39 aa).

The chain crosses the membrane as a helical span at residues 7 to 27; it reads FLTTAPVAFILFSSFVFALFI.

This sequence belongs to the PsaJ family.

It localises to the cellular thylakoid membrane. Its function is as follows. May help in the organization of the PsaE and PsaF subunits. This chain is Photosystem I reaction center subunit IX, found in Synechococcus sp. (strain JA-3-3Ab) (Cyanobacteria bacterium Yellowstone A-Prime).